The sequence spans 86 residues: Large ribosomal subunit protein uL23 (86 aa).

The protein belongs to the universal ribosomal protein uL23 family. Part of the 50S ribosomal subunit. Contacts protein L29.

Functionally, binds to 23S rRNA. One of the proteins that surrounds the polypeptide exit tunnel on the outside of the ribosome. In Methanobrevibacter smithii (strain ATCC 35061 / DSM 861 / OCM 144 / PS), this protein is Large ribosomal subunit protein uL23.